We begin with the raw amino-acid sequence, 268 residues long: Glucosamine-6-phosphate deaminase (268 aa).

The Proton acceptor; for enolization step role is filled by Asp72. The active-site For ring-opening step is Asp141. His143 acts as the Proton acceptor; for ring-opening step in catalysis. The active-site For ring-opening step is the Glu148.

The protein belongs to the glucosamine/galactosamine-6-phosphate isomerase family. NagB subfamily.

It catalyses the reaction alpha-D-glucosamine 6-phosphate + H2O = beta-D-fructose 6-phosphate + NH4(+). It participates in amino-sugar metabolism; N-acetylneuraminate degradation; D-fructose 6-phosphate from N-acetylneuraminate: step 5/5. Allosterically activated by N-acetylglucosamine 6-phosphate (GlcNAc6P). In terms of biological role, catalyzes the reversible isomerization-deamination of glucosamine 6-phosphate (GlcN6P) to form fructose 6-phosphate (Fru6P) and ammonium ion. The chain is Glucosamine-6-phosphate deaminase from Borrelia garinii subsp. bavariensis (strain ATCC BAA-2496 / DSM 23469 / PBi) (Borreliella bavariensis).